Consider the following 119-residue polypeptide: Aspartate 1-decarboxylase (119 aa).

Ser25 serves as the catalytic Schiff-base intermediate with substrate; via pyruvic acid. A Pyruvic acid (Ser) modification is found at Ser25. Position 57 (Thr57) interacts with substrate. The Proton donor role is filled by Tyr58. Residue 73 to 75 (GAA) coordinates substrate.

The protein belongs to the PanD family. As to quaternary structure, heterooctamer of four alpha and four beta subunits. Requires pyruvate as cofactor. Is synthesized initially as an inactive proenzyme, which is activated by self-cleavage at a specific serine bond to produce a beta-subunit with a hydroxyl group at its C-terminus and an alpha-subunit with a pyruvoyl group at its N-terminus.

The protein resides in the cytoplasm. The enzyme catalyses L-aspartate + H(+) = beta-alanine + CO2. It participates in cofactor biosynthesis; (R)-pantothenate biosynthesis; beta-alanine from L-aspartate: step 1/1. In terms of biological role, catalyzes the pyruvoyl-dependent decarboxylation of aspartate to produce beta-alanine. The sequence is that of Aspartate 1-decarboxylase from Ruthia magnifica subsp. Calyptogena magnifica.